The primary structure comprises 244 residues: Phosphoadenosine 5'-phosphosulfate reductase (244 aa).

The active-site Nucleophile; cysteine thiosulfonate intermediate is cysteine 239.

The protein belongs to the PAPS reductase family. CysH subfamily.

Its subcellular location is the cytoplasm. It carries out the reaction [thioredoxin]-disulfide + sulfite + adenosine 3',5'-bisphosphate + 2 H(+) = [thioredoxin]-dithiol + 3'-phosphoadenylyl sulfate. It participates in sulfur metabolism; hydrogen sulfide biosynthesis; sulfite from sulfate: step 3/3. Catalyzes the formation of sulfite from phosphoadenosine 5'-phosphosulfate (PAPS) using thioredoxin as an electron donor. The polypeptide is Phosphoadenosine 5'-phosphosulfate reductase (Escherichia coli O8 (strain IAI1)).